The following is a 346-amino-acid chain: Biotin synthase (346 aa).

Residues 38–256 form the Radical SAM core domain; that stretch reads RQVQVSTLLS…IAIARIMMPT (219 aa). Residues Cys-53, Cys-57, and Cys-60 each contribute to the [4Fe-4S] cluster site. 4 residues coordinate [2Fe-2S] cluster: Cys-97, Cys-128, Cys-188, and Arg-260.

It belongs to the radical SAM superfamily. Biotin synthase family. In terms of assembly, homodimer. The cofactor is [4Fe-4S] cluster. [2Fe-2S] cluster is required as a cofactor.

It catalyses the reaction (4R,5S)-dethiobiotin + (sulfur carrier)-SH + 2 reduced [2Fe-2S]-[ferredoxin] + 2 S-adenosyl-L-methionine = (sulfur carrier)-H + biotin + 2 5'-deoxyadenosine + 2 L-methionine + 2 oxidized [2Fe-2S]-[ferredoxin]. The protein operates within cofactor biosynthesis; biotin biosynthesis; biotin from 7,8-diaminononanoate: step 2/2. Functionally, catalyzes the conversion of dethiobiotin (DTB) to biotin by the insertion of a sulfur atom into dethiobiotin via a radical-based mechanism. This is Biotin synthase from Klebsiella pneumoniae (strain 342).